The following is a 363-amino-acid chain: L-arabinitol 4-dehydrogenase (363 aa).

The Zn(2+) site is built by Cys53, His78, Glu79, Cys108, Cys111, Cys114, Cys122, and Glu163. Residues 190 to 191 (PI), Asp211, Arg216, Ile282, and 306 to 308 (QYR) each bind NAD(+).

It belongs to the zinc-containing alcohol dehydrogenase family. In terms of assembly, homotetramer. Zn(2+) is required as a cofactor.

It catalyses the reaction L-arabinitol + NAD(+) = L-xylulose + NADH + H(+). Its pathway is carbohydrate degradation; L-arabinose degradation via L-arabinitol; D-xylulose 5-phosphate from L-arabinose (fungal route): step 2/5. Its function is as follows. Catalyzes the NAD-dependent oxidation of L-arabinitol to L-xylulose in the fungal L-arabinose catabolic pathway. L-arabinose catabolism is important for using plant material as a carbon source. Not active on D-arabinitol, D-sorbitol and D-mannitol. In Neurospora crassa (strain ATCC 24698 / 74-OR23-1A / CBS 708.71 / DSM 1257 / FGSC 987), this protein is L-arabinitol 4-dehydrogenase (ard-1).